The primary structure comprises 310 residues: Dehydrodolichyl diphosphate synthase 2 (310 aa).

It belongs to the UPP synthase family. Mg(2+) is required as a cofactor.

It participates in protein modification; protein glycosylation. Catalyzes cis-prenyl chain elongation to produce the polyprenyl backbone of dolichol, a glycosyl carrier-lipid required for the biosynthesis of several classes of glycoprotein. The protein is Dehydrodolichyl diphosphate synthase 2 of Arabidopsis thaliana (Mouse-ear cress).